The following is a 555-amino-acid chain: MNPESASCPDRHFFGPASSRMTVNGTIYPIEVGMRKVALKRTYECKGEPFNSMPLYDTSGPFGDPNGEHDVRKGLEPVRDRWGFDNGSAESTKGELSMSERKPRVAKSGEAVTQMHFARKGVITPEMEYVAIRENQALEEWIEKCGGKPVTPEMVRDEVAKGRAIIPANINHPEIEPMIIGRNFRVKINANIGNSALGSSIDEEVEKAVWACRWGADTVMDLSTGKNIHQTREWILRNSPVPIGTVPLYQALEKVGGKAEELSWEVYRDTLVEQAEQGVDYFTIHSGILAATLPDAEARQTGIVSRGGSIMARWCRAHNQENFLFTHFDDICDILRSYDVAVSLGDALRPGSIGDANDAAQFGELKTLGELTLRAWERDVQVMIEGPGHVPLHMIRENMELQLKHCHEAPFYTLGPLVTDVAAGYDHINSAIGGTLIASLGCSMLCYVTPKEHLGLPDRDDVREGVIVHRVAAHAADLAKGSHTAWLRDELMSKARYAFEWEDQFSLALDPLKTRQIHAQNIAATGDTAATAKFCTMCGPDFCSMKRSQETTAGM.

The segment at 78-104 (VRDRWGFDNGSAESTKGELSMSERKPR) is disordered. Residues Asn191, Met220, Tyr249, His285, 305 to 307 (SRG), 346 to 349 (DALR), and Glu385 each bind substrate. His389 is a binding site for Zn(2+). Tyr412 serves as a coordination point for substrate. His453 contributes to the Zn(2+) binding site. [4Fe-4S] cluster is bound by residues Cys535, Cys538, and Cys543.

The protein belongs to the ThiC family. [4Fe-4S] cluster serves as cofactor.

The enzyme catalyses 5-amino-1-(5-phospho-beta-D-ribosyl)imidazole + S-adenosyl-L-methionine = 4-amino-2-methyl-5-(phosphooxymethyl)pyrimidine + CO + 5'-deoxyadenosine + formate + L-methionine + 3 H(+). It functions in the pathway cofactor biosynthesis; thiamine diphosphate biosynthesis. Functionally, catalyzes the synthesis of the hydroxymethylpyrimidine phosphate (HMP-P) moiety of thiamine from aminoimidazole ribotide (AIR) in a radical S-adenosyl-L-methionine (SAM)-dependent reaction. The polypeptide is Phosphomethylpyrimidine synthase (Chlorobaculum parvum (strain DSM 263 / NCIMB 8327) (Chlorobium vibrioforme subsp. thiosulfatophilum)).